Reading from the N-terminus, the 313-residue chain is MPVKIPDHLPAAGILESENIFVMSETRAANQDIRPMKVLILNLMPNKIETETQLLRLLGNTPLQVDVDLLRIHDKESKHTSIDHMNTFYRDFEDVRHKNYDGLIITGAPLGQIDFEDVTYWDHIREIIDWSQQHVTSVLFLCWAAHAGLYHLYGLNRKILEQKRSGVFVHRRTCQHFPLLRGFDDEFFAPHSRFAEMDVEEIRQHPQLQLLAESDEAGAYLVLSRNNRNLFVMGHPEYQKSTLNDEYHRDLAQSLNPNVPQNYYRNDDPKADAIARWHSHGSLLVSNWLNYYVYQLTPYDLSDMTAMTPWESQ.

The Acyl-thioester intermediate role is filled by Cys142. Substrate contacts are provided by Lys163 and Ser192. Residue His235 is the Proton acceptor of the active site. The active site involves Glu237. Arg249 lines the substrate pocket.

This sequence belongs to the MetA family.

It is found in the cytoplasm. The catalysed reaction is L-homoserine + succinyl-CoA = O-succinyl-L-homoserine + CoA. The protein operates within amino-acid biosynthesis; L-methionine biosynthesis via de novo pathway; O-succinyl-L-homoserine from L-homoserine: step 1/1. Functionally, transfers a succinyl group from succinyl-CoA to L-homoserine, forming succinyl-L-homoserine. This chain is Homoserine O-succinyltransferase, found in Shewanella oneidensis (strain ATCC 700550 / JCM 31522 / CIP 106686 / LMG 19005 / NCIMB 14063 / MR-1).